Consider the following 426-residue polypeptide: MTELDLNQYMDRVGRQARAASRAMARASTADKNRALLTIAAAIRRDADKLKAVNARDVERARANGQDAAFVDRLTLSDKAIKTMAEGLEQIAALADPIGEISNMKFRPTGIQVGQMRVPLGVIGIIYESRPNVTIDAAALCLKSGNATILRGGSEAIESNTALAALVAEGLASAGLPPEAVQVVETTDRAAVGRLITMTEYVDVIVPRGGKSLIARLMEEARVPMIKHLDGICHVFIDADADLDKAVRVCDNAKTQRYAPCNTMETLLVSQDIAARALPPLCRIYQEKGVELRVCPATRAMLEAAGFSGLVDAHEEDWRLEYLAPILAIKTVAGLDEAIAHINEYGSHHTDSIITENYSTGMRFIREVDSASVMINASTRFADGFEYGLGAEIGISNDKLHARGPVGLEGLTSLKYVVFGHGEIRT.

The protein belongs to the gamma-glutamyl phosphate reductase family.

It is found in the cytoplasm. The enzyme catalyses L-glutamate 5-semialdehyde + phosphate + NADP(+) = L-glutamyl 5-phosphate + NADPH + H(+). The protein operates within amino-acid biosynthesis; L-proline biosynthesis; L-glutamate 5-semialdehyde from L-glutamate: step 2/2. Catalyzes the NADPH-dependent reduction of L-glutamate 5-phosphate into L-glutamate 5-semialdehyde and phosphate. The product spontaneously undergoes cyclization to form 1-pyrroline-5-carboxylate. In Cupriavidus pinatubonensis (strain JMP 134 / LMG 1197) (Cupriavidus necator (strain JMP 134)), this protein is Gamma-glutamyl phosphate reductase.